Here is a 31-residue protein sequence, read N- to C-terminus: Potassium channel toxin alpha-KTx 5.4 (31 aa).

Cystine bridges form between Cys-3–Cys-21, Cys-8–Cys-26, and Cys-12–Cys-28. Residues 6-9 (RRCE) are [R/K]XCQ motif. Tyrosine amide is present on Tyr-31.

It belongs to the short scorpion toxin superfamily. Potassium channel inhibitor family. Alpha-KTx 05 subfamily. As to expression, expressed by the venom gland.

Its subcellular location is the secreted. Blocks small conductance calcium-activated potassium channels. Shows activity on KCa2.2/KCNN2 (IC(50)=0.0243 nM), KCa2.3/KCNN3 (IC(50)=1.7 nM), and KCa2.1/KCNN1 (IC(50)=42 nM). Induces cell death when tested on human T lymphoblastic leukemia Jurkat E6.1 and human breast cancer MDA-MB-231 cell lines which constituvely express KCa2.2/KCNN2, but not on human peripheral blood lymphocytes (which do not express KCa2.2/KCNN2). The sequence is that of Potassium channel toxin alpha-KTx 5.4 from Hottentotta tamulus (Eastern Indian scorpion).